Here is an 89-residue protein sequence, read N- to C-terminus: Small ribosomal subunit protein uS15 (89 aa).

It belongs to the universal ribosomal protein uS15 family. Part of the 30S ribosomal subunit. Forms a bridge to the 50S subunit in the 70S ribosome, contacting the 23S rRNA.

One of the primary rRNA binding proteins, it binds directly to 16S rRNA where it helps nucleate assembly of the platform of the 30S subunit by binding and bridging several RNA helices of the 16S rRNA. Functionally, forms an intersubunit bridge (bridge B4) with the 23S rRNA of the 50S subunit in the ribosome. The sequence is that of Small ribosomal subunit protein uS15 from Chlamydia muridarum (strain MoPn / Nigg).